A 304-amino-acid chain; its full sequence is tRNA pseudouridine synthase A (304 aa).

The active-site Nucleophile is D65. Y123 serves as a coordination point for substrate. A disordered region spans residues 274-304 (HTGQEKPEARLGNGDLESREERPPHEMSPLH). Residues 289 to 298 (LESREERPPH) are compositionally biased toward basic and acidic residues.

It belongs to the tRNA pseudouridine synthase TruA family. In terms of assembly, homodimer.

It carries out the reaction uridine(38/39/40) in tRNA = pseudouridine(38/39/40) in tRNA. Formation of pseudouridine at positions 38, 39 and 40 in the anticodon stem and loop of transfer RNAs. This is tRNA pseudouridine synthase A from Gloeobacter violaceus (strain ATCC 29082 / PCC 7421).